The chain runs to 335 residues: Foldase protein PrsA (335 aa).

The N-terminal stretch at 1-20 is a signal peptide; the sequence is MKKKIFAGAVTLLSVAVLAA. A lipid anchor (N-palmitoyl cysteine) is attached at cysteine 21. Residue cysteine 21 is the site of S-diacylglycerol cysteine attachment. Residues 142 to 239 form the PpiC domain; it reads TPEVTAQIIK…ASYYIVKLVK (98 aa). Residues 300–335 are disordered; sequence TGSSTSSSSAASSSKTSESSSAAESSSKEASSSAAE. Positions 302-335 are enriched in low complexity; the sequence is SSTSSSSAASSSKTSESSSAAESSSKEASSSAAE.

The protein belongs to the PrsA family.

The protein localises to the cell membrane. It catalyses the reaction [protein]-peptidylproline (omega=180) = [protein]-peptidylproline (omega=0). Its function is as follows. Plays a major role in protein secretion by helping the post-translocational extracellular folding of several secreted proteins. This Streptococcus sanguinis (strain SK36) protein is Foldase protein PrsA.